The following is a 482-amino-acid chain: Glutamate--tRNA ligase 1 (482 aa).

Positions 18 to 28 (PSPTGYLHLGG) match the 'HIGH' region motif. Residues 252–256 (KLSKR) carry the 'KMSKS' region motif. Position 255 (lysine 255) interacts with ATP.

This sequence belongs to the class-I aminoacyl-tRNA synthetase family. Glutamate--tRNA ligase type 1 subfamily. Monomer.

It localises to the cytoplasm. It catalyses the reaction tRNA(Glu) + L-glutamate + ATP = L-glutamyl-tRNA(Glu) + AMP + diphosphate. Catalyzes the attachment of glutamate to tRNA(Glu) in a two-step reaction: glutamate is first activated by ATP to form Glu-AMP and then transferred to the acceptor end of tRNA(Glu). This chain is Glutamate--tRNA ligase 1, found in Erythrobacter litoralis (strain HTCC2594).